A 369-amino-acid chain; its full sequence is Chromatin modification-related protein EAF3 (369 aa).

Positions 9–97 (TVYAYHGPLI…WDEWVGIDRI (89 aa)) constitute a Tudor-knot domain. 2 disordered regions span residues 43-66 (PLEE…IAKF) and 126-191 (IIVN…NKSK). Residues 53–62 (NHHHHHHSQH) are compositionally biased toward basic residues. Residues 126–135 (IIVNATTKNH) show a composition bias toward low complexity. Residues 136-149 (TNNKNKKESNKRKS) show a composition bias toward basic residues. The span at 150–191 (SSATTTSGVTAGTNNNKKQKSASTSTTNNTSGNSGTTSNKSK) shows a compositional bias: low complexity. Residues 193–368 (ILSRLNLNFP…TSPQYDSLAR (176 aa)) enclose the MRG domain.

This sequence belongs to the MRG family. In terms of assembly, component of the NuA4 histone acetyltransferase complex.

It is found in the nucleus. In terms of biological role, involved in deacetylation of histones, chromatin assembly and chromosome segregation. May act as a transcriptional oscillator, directing histone deacetylases to specific chromosomal domains. Component of the NuA4 histone acetyltransferase complex which is involved in transcriptional activation of selected genes principally by acetylation of nucleosomal histone H4 and H2A. The NuA4 complex is also involved in DNA repair. This Candida albicans (strain SC5314 / ATCC MYA-2876) (Yeast) protein is Chromatin modification-related protein EAF3 (EAF3).